Consider the following 160-residue polypeptide: Small RNA binding protein 1 (160 aa).

Residues 8-86 (FRCFVGGLAW…RNITVNEAQQ (79 aa)) form the RRM domain. The tract at residues 82–160 (NEAQQRGGGG…GGGSEGGWRN (79 aa)) is disordered. The segment covering 87-160 (RGGGGGGGYN…GGGSEGGWRN (74 aa)) has biased composition (gly residues). The interval 88–157 (GGGGGGGYNR…GSGGGGSEGG (70 aa)) is glycine-rich (GR) required for cell-to-cell movement.

This sequence belongs to the GR-RBP family. As to quaternary structure, binds to small phloem-mobile single-stranded RNAs (ss-sRNA, e.g. small interfering RNA (siRNA) and microRNA (miRNA)) in the phloeme exudate, including viral-derived sRNA (vsiRNA). Accumulates in phloem exudates.

The protein resides in the secreted. In terms of biological role, possibly has a role in RNA transcription or processing during stress. Binds sequence non-specifically to RNAs and DNAs. Mediates cell-to-cell trafficking of RNA interference (RNAi) signals (small RNAs (sRNA), e.g. small interfering RNA (siRNA) and microRNA (miRNA)) which regulate growth and development, as well as responses to environmental inputs, including pathogen attack; can compromise zucchini yellow mosaic virus (ZYMV) and tobacco rattle virus (TRV) infections at the early stage. The chain is Small RNA binding protein 1 from Cucumis sativus (Cucumber).